The following is a 307-amino-acid chain: Sex-lethal homolog (307 aa).

2 consecutive RRM domains span residues 85-163 (TNLI…YARP) and 171-251 (TNLY…LAEE). The segment covering 285-299 (HRGRHNKNRNQKPHP) has biased composition (basic residues). Residues 285–307 (HRGRHNKNRNQKPHPYHNPQKFI) form a disordered region.

Its subcellular location is the nucleus. In terms of biological role, unknown; apparently not involved in somatic sex determination. This Chrysomya rufifacies (Hairy maggot blowfly) protein is Sex-lethal homolog (SXL).